The following is a 264-amino-acid chain: Small ribosomal subunit protein uS2 (264 aa).

Positions Gly-222 to Gln-246 are disordered.

It belongs to the universal ribosomal protein uS2 family.

The chain is Small ribosomal subunit protein uS2 from Helicobacter hepaticus (strain ATCC 51449 / 3B1).